The following is a 268-amino-acid chain: Undecaprenyl-diphosphatase (268 aa).

8 consecutive transmembrane segments (helical) span residues 1-21 (MSLI…FLPI), 39-59 (QGPL…LVYF), 85-105 (ALLV…LVAF), 110-130 (ALRS…PLWL), 144-164 (MSFK…IPGA), 187-207 (FSML…LIEL), 221-241 (DGLI…AVLM), and 247-267 (IGFL…LVFF).

The protein belongs to the UppP family.

It is found in the cell inner membrane. The enzyme catalyses di-trans,octa-cis-undecaprenyl diphosphate + H2O = di-trans,octa-cis-undecaprenyl phosphate + phosphate + H(+). Its function is as follows. Catalyzes the dephosphorylation of undecaprenyl diphosphate (UPP). Confers resistance to bacitracin. The polypeptide is Undecaprenyl-diphosphatase (Maricaulis maris (strain MCS10) (Caulobacter maris)).